A 249-amino-acid polypeptide reads, in one-letter code: MSLFTSLPFLLLTAVTASCADTETENCENIRKTCPVIACGPPGINGIPGKDGRDGAKGEKGEPGQGLRGSQGPPGKMGPQGTPGIPGIPGPIGQKGDPGENMGDYIRLATSERATLQSELNQIKNWLIFSLGKRVGKKAFFTNGKKMPFNEVKTLCAQFQGRVATPMNAEENRALKDLVTEEAFLGITDQETEGKFVDLTGKGVTYQNWNDGEPNNASPGEHCVTLLSDGTWNDIACSASFLTVCEFSL.

The first 20 residues, 1 to 20 (MSLFTSLPFLLLTAVTASCA), serve as a signal peptide directing secretion. In terms of domain architecture, Collagen-like spans 43–101 (GINGIPGKDGRDGAKGEKGEPGQGLRGSQGPPGKMGPQGTPGIPGIPGPIGQKGDPGEN). Positions 43–103 (GINGIPGKDG…QKGDPGENMG (61 aa)) are disordered. Pro48 carries the 4-hydroxyproline modification. The segment covering 50 to 62 (KDGRDGAKGEKGE) has biased composition (basic and acidic residues). Residues Pro63, Pro74, Pro83, and Pro86 each carry the 4-hydroxyproline modification. Residues 79-95 (PQGTPGIPGIPGPIGQK) show a composition bias toward low complexity. Positions 113–131 (RATLQSELNQIKNWLIFSL) form a coiled coil. Residues 135 to 246 (VGKKAFFTNG…CSASFLTVCE (112 aa)) enclose the C-type lectin domain. Disulfide bonds link Cys156/Cys245 and Cys223/Cys237.

As to quaternary structure, oligomeric complex of 3 or more homotrimers. Interacts with MASP1 and MASP2. Interacts with MEP1A and MEP1B and may inhibit their catalytic activity. In terms of processing, hydroxylation on proline residues within the sequence motif, GXPG, is most likely to be 4-hydroxy as this fits the requirement for 4-hydroxylation in vertebrates.

The protein resides in the secreted. Functionally, calcium-dependent lectin involved in innate immune defense. Binds mannose, fucose and N-acetylglucosamine on different microorganisms and activates the lectin complement pathway. Binds to late apoptotic cells, as well as to apoptotic blebs and to necrotic cells, but not to early apoptotic cells, facilitating their uptake by macrophages. In Bos taurus (Bovine), this protein is Mannose-binding protein C (MBL).